The primary structure comprises 148 residues: uncharacterized protein (148 aa).

The disordered stretch occupies residues 55–148; it reads KMRCGESGAG…RNQGQLYPQP (94 aa). The segment covering 68–104 has biased composition (polar residues); the sequence is RSNSAEVSSSQPALASKSQSKWGPTSNNPRGALTTTE.

This is an uncharacterized protein from Homo sapiens (Human).